The chain runs to 172 residues: ATP synthase subunit b (172 aa).

The helical transmembrane segment at 27-47 threads the bilayer; it reads LAIVIFGLYKFLPPFVGGILE.

This sequence belongs to the ATPase B chain family. F-type ATPases have 2 components, F(1) - the catalytic core - and F(0) - the membrane proton channel. F(1) has five subunits: alpha(3), beta(3), gamma(1), delta(1), epsilon(1). F(0) has four main subunits: a(1), b(1), b'(1) and c(10-14). The alpha and beta chains form an alternating ring which encloses part of the gamma chain. F(1) is attached to F(0) by a central stalk formed by the gamma and epsilon chains, while a peripheral stalk is formed by the delta, b and b' chains.

It localises to the cellular thylakoid membrane. F(1)F(0) ATP synthase produces ATP from ADP in the presence of a proton or sodium gradient. F-type ATPases consist of two structural domains, F(1) containing the extramembraneous catalytic core and F(0) containing the membrane proton channel, linked together by a central stalk and a peripheral stalk. During catalysis, ATP synthesis in the catalytic domain of F(1) is coupled via a rotary mechanism of the central stalk subunits to proton translocation. Its function is as follows. Component of the F(0) channel, it forms part of the peripheral stalk, linking F(1) to F(0). This chain is ATP synthase subunit b, found in Prochlorococcus marinus (strain MIT 9303).